Consider the following 271-residue polypeptide: Hydroxyethylthiazole kinase (271 aa).

A substrate-binding site is contributed by Met46. The ATP site is built by Arg122 and Thr169. Residue Gly196 participates in substrate binding.

This sequence belongs to the Thz kinase family. It depends on Mg(2+) as a cofactor.

It carries out the reaction 5-(2-hydroxyethyl)-4-methylthiazole + ATP = 4-methyl-5-(2-phosphooxyethyl)-thiazole + ADP + H(+). Its pathway is cofactor biosynthesis; thiamine diphosphate biosynthesis; 4-methyl-5-(2-phosphoethyl)-thiazole from 5-(2-hydroxyethyl)-4-methylthiazole: step 1/1. Its function is as follows. Catalyzes the phosphorylation of the hydroxyl group of 4-methyl-5-beta-hydroxyethylthiazole (THZ). This Alkaliphilus oremlandii (strain OhILAs) (Clostridium oremlandii (strain OhILAs)) protein is Hydroxyethylthiazole kinase.